The following is a 559-amino-acid chain: Formate--tetrahydrofolate ligase (559 aa).

Position 68-75 (68-75 (TPAGEGKT)) interacts with ATP.

Belongs to the formate--tetrahydrofolate ligase family. In terms of assembly, homotetramer.

The catalysed reaction is (6S)-5,6,7,8-tetrahydrofolate + formate + ATP = (6R)-10-formyltetrahydrofolate + ADP + phosphate. It participates in one-carbon metabolism; tetrahydrofolate interconversion. This chain is Formate--tetrahydrofolate ligase, found in Moorella thermoacetica (Clostridium thermoaceticum).